We begin with the raw amino-acid sequence, 235 residues long: uncharacterized protein (235 aa).

The segment at 37–235 is disordered; sequence QNAKLNDGDN…GGEDYPWPWN (199 aa). Positions 72 to 89 are enriched in acidic residues; that stretch reads GSDDYSDVEDGGAEEGDS. Positions 112 to 124 are enriched in low complexity; sequence TSSTSTASTSSGS. Basic and acidic residues predominate over residues 152–170; sequence RRPELDLSPKIENRSDSSS. Residues 185 to 202 show a composition bias toward polar residues; it reads NKDNPSRGQGNENPSASD.

This sequence belongs to the herpesviridae BKRF4 family.

This is an uncharacterized protein from Alcelaphine herpesvirus 1 (strain C500) (AlHV-1).